Reading from the N-terminus, the 519-residue chain is Putative ATP-dependent RNA helicase L396 (519 aa).

The 149-residue stretch at 110-258 (IKGMEEGGGG…IINWYMGPIL (149 aa)) folds into the Helicase ATP-binding domain. An ATP-binding site is contributed by 123-130 (MGCGSGKT). A DEAH box motif is present at residues 211–214 (DEVH). Positions 317 to 457 (YLIQELFDMG…KQKYNIQKYY (141 aa)) constitute a Helicase C-terminal domain.

This sequence belongs to the DEAD box helicase family. DEAH subfamily.

It carries out the reaction ATP + H2O = ADP + phosphate + H(+). This is Putative ATP-dependent RNA helicase L396 from Acanthamoeba polyphaga (Amoeba).